The following is a 361-amino-acid chain: Peptide chain release factor 1 (361 aa).

Glutamine 233 is subject to N5-methylglutamine. The span at 280-293 (ERRKKEQERADSRR) shows a compositional bias: basic and acidic residues. Residues 280–307 (ERRKKEQERADSRRGQVGSGDRSERIRT) are disordered.

The protein belongs to the prokaryotic/mitochondrial release factor family. Post-translationally, methylated by PrmC. Methylation increases the termination efficiency of RF1.

It is found in the cytoplasm. In terms of biological role, peptide chain release factor 1 directs the termination of translation in response to the peptide chain termination codons UAG and UAA. This Rickettsia massiliae (strain Mtu5) protein is Peptide chain release factor 1.